Consider the following 311-residue polypeptide: Catechol 1,2-dioxygenase (311 aa).

Tyrosine 164 contacts catechol. The Fe cation site is built by tyrosine 164, tyrosine 200, histidine 224, and histidine 226. A catechol-binding site is contributed by 224-226 (HIH).

It belongs to the intradiol ring-cleavage dioxygenase family. In terms of assembly, homodimer. The cofactor is Fe(3+).

The catalysed reaction is catechol + O2 = cis,cis-muconate + 2 H(+). It functions in the pathway aromatic compound metabolism; beta-ketoadipate pathway; 5-oxo-4,5-dihydro-2-furylacetate from catechol: step 1/3. This is Catechol 1,2-dioxygenase from Acinetobacter baylyi (strain ATCC 33305 / BD413 / ADP1).